The sequence spans 552 residues: Urocanate hydratase (552 aa).

NAD(+)-binding positions include glycine 49–glycine 50, glutamine 127, glycine 173–glycine 175, aspartate 193, asparagine 239–alanine 240, glutamine 260–histidine 264, tyrosine 270–valine 271, and tyrosine 319. Cysteine 407 is an active-site residue. NAD(+) is bound at residue glycine 489.

It belongs to the urocanase family. NAD(+) serves as cofactor.

The protein resides in the cytoplasm. It carries out the reaction 4-imidazolone-5-propanoate = trans-urocanate + H2O. It functions in the pathway amino-acid degradation; L-histidine degradation into L-glutamate; N-formimidoyl-L-glutamate from L-histidine: step 2/3. Its function is as follows. Catalyzes the conversion of urocanate to 4-imidazolone-5-propionate. The sequence is that of Urocanate hydratase from Bacillus cytotoxicus (strain DSM 22905 / CIP 110041 / 391-98 / NVH 391-98).